We begin with the raw amino-acid sequence, 591 residues long: Formate--tetrahydrofolate ligase (591 aa).

ATP is bound at residue 74–81 (TPLGEGKS).

This sequence belongs to the formate--tetrahydrofolate ligase family.

It catalyses the reaction (6S)-5,6,7,8-tetrahydrofolate + formate + ATP = (6R)-10-formyltetrahydrofolate + ADP + phosphate. It functions in the pathway one-carbon metabolism; tetrahydrofolate interconversion. The polypeptide is Formate--tetrahydrofolate ligase (Desulfovibrio desulfuricans (strain ATCC 27774 / DSM 6949 / MB)).